The following is a 317-amino-acid chain: Glutathione synthetase (317 aa).

The ATP-grasp domain occupies 124-310; the sequence is EKLFTAWFPE…ITGKLMDAIE (187 aa). Residue 150 to 207 coordinates ATP; it reads FRQEHGDIILKPLDGMGGASIFRVKENDPNVSVIIETLTNHGQNYAMAQTFVPDISNG. Residues Glu-281 and Asn-283 each coordinate Mg(2+).

It belongs to the prokaryotic GSH synthase family. It depends on Mg(2+) as a cofactor. Requires Mn(2+) as cofactor.

It carries out the reaction gamma-L-glutamyl-L-cysteine + glycine + ATP = glutathione + ADP + phosphate + H(+). It participates in sulfur metabolism; glutathione biosynthesis; glutathione from L-cysteine and L-glutamate: step 2/2. The polypeptide is Glutathione synthetase (Vibrio vulnificus (strain CMCP6)).